The primary structure comprises 149 residues: Large ribosomal subunit protein bL9 (149 aa).

Belongs to the bacterial ribosomal protein bL9 family.

In terms of biological role, binds to the 23S rRNA. The polypeptide is Large ribosomal subunit protein bL9 (Aliivibrio fischeri (strain ATCC 700601 / ES114) (Vibrio fischeri)).